The sequence spans 313 residues: Olfactory receptor 2B6 (313 aa).

Over 1-27 the chain is Extracellular; sequence MSWANESITGEFVLLGFSDQPWLEFPL. N-linked (GlcNAc...) asparagine glycosylation is present at N5. The chain crosses the membrane as a helical span at residues 28-48; the sequence is FVVFLTSYIVTIFGNLNIILV. At 49–57 the chain is on the cytoplasmic side; the sequence is SHLDPKLHT. A helical transmembrane segment spans residues 58–78; sequence PMYFFLTNLSVIDLCYITCTV. Over 79 to 97 the chain is Extracellular; the sequence is PQMLVNLRSIRKVISFGGC. A disulfide bridge connects residues C97 and C189. The helical transmembrane segment at 98–118 threads the bilayer; it reads VVQLFMFLALGATECVLLPVM. The Cytoplasmic portion of the chain corresponds to 119–143; sequence SFDRFVAICRPLHYSVIMHQRLCLQ. A helical transmembrane segment spans residues 144–164; it reads LAAVSWIIGFGNSVWLSILTL. Residues 165 to 200 are Extracellular-facing; sequence QLPRCGHYVIDHFLCEVPALLKLSCVDVTANEAELF. A helical transmembrane segment spans residues 201–221; the sequence is FVSVFFHLTPLSLILTSYAFI. The Cytoplasmic segment spans residues 222–244; the sequence is ARAILKIQSAEGRQKAFGTCSSH. Residues 245 to 265 form a helical membrane-spanning segment; that stretch reads LIVVSLFYGTALSVYFLPPSP. Residues 266–271 are Extracellular-facing; the sequence is HSKNRR. The chain crosses the membrane as a helical span at residues 272-292; sequence KMVPLFYGIIAPMLNPLIYTL. Residues 293–313 are Cytoplasmic-facing; it reads RNKEVKDAFKRLIKRVFLSKN.

This sequence belongs to the G-protein coupled receptor 1 family.

The protein resides in the cell membrane. Its function is as follows. Odorant receptor. The protein is Olfactory receptor 2B6 of Mus musculus (Mouse).